The sequence spans 546 residues: Phosphatidylinositol 4-phosphate 5-kinase type-1 alpha (546 aa).

In terms of domain architecture, PIPK spans 65–433 (TSSALKGAIQ…RFQRFMCNTV (369 aa)). A Glycyl lysine isopeptide (Lys-Gly) (interchain with G-Cter in ubiquitin) cross-link involves residue lysine 87. Positions 441 to 522 (PSPTKKFRSG…PGPSFSPAVG (82 aa)) are disordered. A compositionally biased stretch (low complexity) spans 449-461 (SGPSFSRRSGPSG). Residues 462-471 (NSCTPSQPTA) show a composition bias toward polar residues. Basic and acidic residues predominate over residues 473–493 (GEHKAQVTTKAEVEPDIHLGR).

As to quaternary structure, interacts with RAC1. Interacts with TUT1. Forms a complex with CDH1/E-cadherin, CTNNB1/beta-catenin and CTNND1 at the plasma membrane upon calcium stimulation. Found in a ternary complex with IRS1 and DGKZ in the absence of insulin stimulation. Interacts with DGKZ. Interacts with PIP4K2C; the interaction inhibits PIP5K1A kinase activity.

It is found in the cell membrane. It localises to the cytoplasm. Its subcellular location is the nucleus. The protein resides in the nucleus speckle. The protein localises to the cell projection. It is found in the ruffle. It localises to the lamellipodium. The enzyme catalyses a 1,2-diacyl-sn-glycero-3-phospho-(1D-myo-inositol 4-phosphate) + ATP = a 1,2-diacyl-sn-glycero-3-phospho-(1D-myo-inositol-4,5-bisphosphate) + ADP + H(+). It catalyses the reaction 1-octadecanoyl-2-(5Z,8Z,11Z,14Z)-eicosatetraenoyl-sn-glycero-3-phospho-1D-myo-inositol 4-phosphate + ATP = 1-octadecanoyl-2-(5Z,8Z,11Z,14Z)-eicosatetraenoyl-sn-glycero-3-phospho-1D-myo-inositol 4,5-bisphosphate + ADP + H(+). The catalysed reaction is 1,2-dihexadecanoyl-sn-glycero-3-phospho-(1D-myo-inositol-4-phosphate) + ATP = 1,2-dihexadecanoyl-sn-glycero-3-phospho-(1D-myo-inositol-4,5-bisphosphate) + ADP + H(+). It carries out the reaction 1-octadecanoyl-2-(9Z)-octadecenoyl-sn-glycero-3-phospho-1D-myo-inositol 4-phosphate + ATP = 1-octadecanoyl-2-(9Z)-octadecenoyl-sn-glycero-3-phospho-1D-myo-inositol 4,5-bisphosphate + ADP + H(+). The enzyme catalyses 1-octadecanoyl-2-(9Z)-octadecenoyl-sn-glycero-3-phospho-1D-myo-inositol + ATP = 1-octadecanoyl-2-(9Z)-octadecenoyl-sn-glycero-3-phospho-1D-myo-inositol 5-phosphate + ADP + H(+). It catalyses the reaction 1-octadecanoyl-2-(9Z,12Z)-octadecadienoyl-sn-glycero-3-phospho-1D-myo-inositol + ATP = 1-octadecanoyl-2-(9Z,12Z)-octadecadienoyl-sn-glycero-3-phospho-1D-myo-inositol 5-phosphate + ADP + H(+). The catalysed reaction is 1-octadecanoyl-2-(5Z,8Z,11Z,14Z-eicosatetraenoyl)-sn-glycero-3-phospho-(1D-myo-inositol) + ATP = 1-octadecanoyl-2-(5Z,8Z,11Z,14Z)-eicosatetraenoyl-sn-glycero-3-phospho-1D-myo-inositol 5-phosphate + ADP + H(+). It carries out the reaction 1,2-di-(9Z,12Z)-octadecadienoyl-sn-glycero-3-phospho-1D-myo-inositol + ATP = 1,2-di(9Z,12Z)-octadecadienoyl-sn-glycero-3-phospho-1D-myo-inositol 5-phosphate + ADP + H(+). In terms of biological role, catalyzes the phosphorylation of phosphatidylinositol 4-phosphate (PtdIns(4)P/PI4P) to form phosphatidylinositol 4,5-bisphosphate (PtdIns(4,5)P2/PIP2), a lipid second messenger that regulates several cellular processes such as signal transduction, vesicle trafficking, actin cytoskeleton dynamics, cell adhesion, and cell motility. PtdIns(4,5)P2 can directly act as a second messenger or can be utilized as a precursor to generate other second messengers: inositol 1,4,5-trisphosphate (IP3), diacylglycerol (DAG) or phosphatidylinositol-3,4,5-trisphosphate (PtdIns(3,4,5)P3/PIP3). PIP5K1A-mediated phosphorylation of PtdIns(4)P is the predominant pathway for PtdIns(4,5)P2 synthesis. Can also use phosphatidylinositol (PtdIns) as substrate in vitro. Together with PIP5K1C, is required for phagocytosis, both enzymes regulating different types of actin remodeling at sequential steps. Promotes particle ingestion by activating the WAS GTPase-binding protein that induces Arp2/3 dependent actin polymerization at the nascent phagocytic cup. Together with PIP5K1B, is required, after stimulation by G-protein coupled receptors, for the synthesis of IP3 that will induce stable platelet adhesion. Recruited to the plasma membrane by the E-cadherin/beta-catenin complex where it provides the substrate PtdIns(4,5)P2 for the production of PtdIns(3,4,5)P3, IP3 and DAG, that will mobilize internal calcium and drive keratinocyte differentiation. Positively regulates insulin-induced translocation of SLC2A4 to the cell membrane in adipocytes. Together with PIP5K1C has a role during embryogenesis. Independently of its catalytic activity, is required for membrane ruffling formation, actin organization and focal adhesion formation during directional cell migration by controlling integrin-induced translocation of the small GTPase RAC1 to the plasma membrane. Also functions in the nucleus where it acts as an activator of TUT1 adenylyltransferase activity in nuclear speckles, thereby regulating mRNA polyadenylation of a select set of mRNAs. This is Phosphatidylinositol 4-phosphate 5-kinase type-1 alpha from Rattus norvegicus (Rat).